A 373-amino-acid chain; its full sequence is Queuine tRNA-ribosyltransferase (373 aa).

The active-site Proton acceptor is Asp-90. Substrate-binding positions include 90 to 94 (DSGGF), Asp-144, Gln-193, and Gly-220. The RNA binding stretch occupies residues 251–257 (GVGTPED). Asp-270 (nucleophile) is an active-site residue. An RNA binding; important for wobble base 34 recognition region spans residues 275-279 (TRNAR). 4 residues coordinate Zn(2+): Cys-308, Cys-310, Cys-313, and His-339.

This sequence belongs to the queuine tRNA-ribosyltransferase family. Homodimer. Within each dimer, one monomer is responsible for RNA recognition and catalysis, while the other monomer binds to the replacement base PreQ1. The cofactor is Zn(2+).

It carries out the reaction 7-aminomethyl-7-carbaguanine + guanosine(34) in tRNA = 7-aminomethyl-7-carbaguanosine(34) in tRNA + guanine. It participates in tRNA modification; tRNA-queuosine biosynthesis. In terms of biological role, catalyzes the base-exchange of a guanine (G) residue with the queuine precursor 7-aminomethyl-7-deazaguanine (PreQ1) at position 34 (anticodon wobble position) in tRNAs with GU(N) anticodons (tRNA-Asp, -Asn, -His and -Tyr). Catalysis occurs through a double-displacement mechanism. The nucleophile active site attacks the C1' of nucleotide 34 to detach the guanine base from the RNA, forming a covalent enzyme-RNA intermediate. The proton acceptor active site deprotonates the incoming PreQ1, allowing a nucleophilic attack on the C1' of the ribose to form the product. After dissociation, two additional enzymatic reactions on the tRNA convert PreQ1 to queuine (Q), resulting in the hypermodified nucleoside queuosine (7-(((4,5-cis-dihydroxy-2-cyclopenten-1-yl)amino)methyl)-7-deazaguanosine). In Campylobacter jejuni subsp. jejuni serotype O:23/36 (strain 81-176), this protein is Queuine tRNA-ribosyltransferase.